The sequence spans 185 residues: Transcription termination/antitermination protein NusG (185 aa).

The KOW domain occupies 134-162 (PGQMVRVIDGPFNDFDGLVEEVNYEKNRL).

Belongs to the NusG family.

Functionally, participates in transcription elongation, termination and antitermination. The protein is Transcription termination/antitermination protein NusG of Xylella fastidiosa (strain Temecula1 / ATCC 700964).